A 719-amino-acid chain; its full sequence is Solute carrier family 15 member 2 (719 aa).

Residues 1 to 43 (MGKMKDKDVDAEKYEKAQRSPKLCGTNYPVSIAFIVVNEFCER) lie on the Cytoplasmic side of the membrane. A helical membrane pass occupies residues 44–61 (FSYYGMKAVLTLYFMNYL). At 62-69 (HWDKNLST) the chain is on the extracellular side. N66 carries N-linked (GlcNAc...) asparagine glycosylation. The helical transmembrane segment at 70 to 90 (AIYHAFSGLCYFTPLLGALIA) threads the bilayer. Over 91–99 (DSWLGKFKT) the chain is Cytoplasmic. Residues 100–120 (IIYLSIVYVIGHVVKSVGAIP) form a helical membrane-spanning segment. Topologically, residues 121 to 125 (DVGDS) are extracellular. The chain crosses the membrane as a helical span at residues 126–146 (TVHIALSMVGLGLIALGTGGI). Topologically, residues 147–169 (KPCVAAFGGDQFDEDNIDERRKF) are cytoplasmic. The chain crosses the membrane as a helical span at residues 170-190 (FSIFYMSINAGSVLSTIITPI). Topologically, residues 191 to 201 (LRGDVQCFGGD) are extracellular. The helical transmembrane segment at 202–222 (CYALAFGVPAALMVIALVVFI) threads the bilayer. The Cytoplasmic segment spans residues 223–280 (SGSGLYKKSPPEGNVLVRVCKCIGFAISNRWTNSKKSPKRSHWLDWAEEKYSKRLIQE). Residues 281–301 (IKMVCRVLVLYIPLPMFWALF) traverse the membrane as a helical segment. Residues 302-334 (DQQGSRWTLQATRMNMDFGGGFIIKPDQMQMLN) are Extracellular-facing. The chain crosses the membrane as a helical span at residues 335-355 (ALLILVFIPIFDMGIYPLVGL). Over 356-367 (CRIKLTPLKKMA) the chain is Cytoplasmic. The helical transmembrane segment at 368 to 388 (TGMILAALAFCAATAVEVYVI) threads the bilayer. The Extracellular portion of the chain corresponds to 389-594 (KTVVEPPPAK…QANNIHIGWQ (206 aa)). Residues 389–594 (KTVVEPPPAK…QANNIHIGWQ (206 aa)) form an extracellular domain (ECD) region. 3 N-linked (GlcNAc...) asparagine glycosylation sites follow: N481, N513, and N532. The helical transmembrane segment at 595-615 (IPQYVFLTAGEVMFSITGLEF) threads the bilayer. The Cytoplasmic portion of the chain corresponds to 616 to 626 (SYSQAPASMKS). Residues 627-647 (VLQAGWLMTVAFGNVIVLIVA) form a helical membrane-spanning segment. Residues 648–657 (EGAGMEQWVE) lie on the Extracellular side of the membrane. Residues 658 to 678 (FLLFAALLVAVSIIFSIMAYF) form a helical membrane-spanning segment. Topologically, residues 679–719 (YTYVDPDQLDKLFKEDGDGGKVESSKKDELSLGDMPKQTKM) are cytoplasmic. Residues 695–708 (GDGGKVESSKKDEL) show a composition bias toward basic and acidic residues. A disordered region spans residues 695-719 (GDGGKVESSKKDELSLGDMPKQTKM).

Belongs to the major facilitator superfamily. Proton-dependent oligopeptide transporter (POT/PTR) (TC 2.A.17) family. In terms of tissue distribution, expressed in kidney, brain and gut. Also expressed weakly in eye, gill and skeletal muscle.

The protein resides in the apical cell membrane. It is found in the cytoplasmic vesicle. Its subcellular location is the phagosome membrane. The protein localises to the cell membrane. It catalyses the reaction a dipeptide(out) + 2 H(+)(out) = a dipeptide(in) + 2 H(+)(in). It carries out the reaction N-acetyl-D-muramoyl-L-alanyl-D-isoglutamine(out) + 3 H(+)(out) = N-acetyl-D-muramoyl-L-alanyl-D-isoglutamine(in) + 3 H(+)(in). The catalysed reaction is glycyl-L-leucine(out) + 2 H(+)(out) = glycyl-L-leucine(in) + 2 H(+)(in). The enzyme catalyses glycyl-L-lysine(out) + 2 H(+)(out) = glycyl-L-lysine(in) + 2 H(+)(in). It catalyses the reaction glycyl-L-glutamate(out) + 3 H(+)(out) = glycyl-L-glutamate(in) + 3 H(+)(in). It carries out the reaction L-alanyl-L-alanine(out) + 2 H(+)(out) = L-alanyl-L-alanine(in) + 2 H(+)(in). The catalysed reaction is an L-amino acid tripeptide(out) + 2 H(+)(out) = an L-amino acid tripeptide(in) + 2 H(+)(in). The enzyme catalyses carnosine(out) + 2 H(+)(out) = carnosine(in) + 2 H(+)(in). Functionally, proton-coupled amino-acid transporter that transports oligopeptides of 2 to 4 amino acids with a preference for dipeptides. Transports neutral and anionic dipeptides with a proton to peptide stoichiometry of 2:1 or 3:1. The sequence is that of Solute carrier family 15 member 2 from Danio rerio (Zebrafish).